A 270-amino-acid polypeptide reads, in one-letter code: Glucosamine-6-phosphate deaminase (270 aa).

The active-site Proton acceptor; for enolization step is D68. The For ring-opening step role is filled by D145. H147 functions as the Proton acceptor; for ring-opening step in the catalytic mechanism. The For ring-opening step role is filled by E152.

Belongs to the glucosamine/galactosamine-6-phosphate isomerase family. NagB subfamily.

The enzyme catalyses alpha-D-glucosamine 6-phosphate + H2O = beta-D-fructose 6-phosphate + NH4(+). The protein operates within amino-sugar metabolism; N-acetylneuraminate degradation; D-fructose 6-phosphate from N-acetylneuraminate: step 5/5. Functionally, catalyzes the reversible isomerization-deamination of glucosamine 6-phosphate (GlcN6P) to form fructose 6-phosphate (Fru6P) and ammonium ion. In Bifidobacterium longum subsp. infantis (strain ATCC 15697 / DSM 20088 / JCM 1222 / NCTC 11817 / S12), this protein is Glucosamine-6-phosphate deaminase.